Here is a 438-residue protein sequence, read N- to C-terminus: Enolase (438 aa).

His159 and Glu168 together coordinate substrate. The active-site Proton donor is Glu211. 3 residues coordinate Mg(2+): Asp246, Glu297, and Asp322. Substrate contacts are provided by Glu297 and Asp322. Lys347 acts as the Proton acceptor in catalysis. Substrate contacts are provided by residues 374–377 (SHRS) and Lys398.

It belongs to the enolase family. As to quaternary structure, homodimer. Mg(2+) serves as cofactor.

It localises to the cytoplasm. It catalyses the reaction (2R)-2-phosphoglycerate = phosphoenolpyruvate + H2O. Its pathway is carbohydrate degradation; glycolysis; pyruvate from D-glyceraldehyde 3-phosphate: step 4/5. In Neurospora crassa (strain ATCC 24698 / 74-OR23-1A / CBS 708.71 / DSM 1257 / FGSC 987), this protein is Enolase (emp-7).